The chain runs to 280 residues: Myb family transcription factor PHL11 (280 aa).

The 61-residue stretch at 20–80 (RDPKPRLRWT…HLQKYRLGQQ (61 aa)) folds into the HTH myb-type domain. The segment at residues 51–76 (PKSVLKLMGLKGLTLYHLKSHLQKYR) is a DNA-binding region (H-T-H motif). The disordered stretch occupies residues 77 to 98 (LGQQQGKKQNRTEQNKENAGSS). The tract at residues 129–149 (AEAMRHQVDAQQRFQEQLEVQ) is coiled coil. The LHEQLE motif lies at 142–147 (FQEQLE).

This sequence belongs to the MYB-CC family.

It is found in the nucleus. In Arabidopsis thaliana (Mouse-ear cress), this protein is Myb family transcription factor PHL11.